Reading from the N-terminus, the 166-residue chain is UPF0561 protein C2orf68 (166 aa).

Residues 32–107 are disordered; it reads NQIARDDYDK…SELEPSGHQL (76 aa). Basic and acidic residues-rich tracts occupy residues 34-49 and 73-85; these read IARD…AAKE and RHRD…RNPD. The segment covering 91–104 has biased composition (low complexity); that stretch reads ESSSSGGSELEPSG.

It belongs to the UPF0561 family.

This chain is UPF0561 protein C2orf68 (C2orf68), found in Homo sapiens (Human).